Consider the following 1694-residue polypeptide: Immunoglobulin A1 protease autotransporter (1694 aa).

Residues 1–25 (MLNKKFKLNFIALTVAYALTPYTEA) form the signal peptide. One can recognise a Peptidase S6 domain in the interval 26–332 (ALVRDDVDYQ…NIYKPEFAKT (307 aa)). Serine 288 is a catalytic residue. Residues 991–1403 (VEKRNQTVDT…GSDRSTVALR (413 aa)) form a disordered region. A compositionally biased stretch (polar residues) spans 997 to 1021 (TVDTTNITTPNNIQADVPSVPSNNE). Residues 1037-1047 (TPSETTETVAE) are compositionally biased toward low complexity. Residues 1049–1061 (SKQESKTVEKNEQ) show a composition bias toward basic and acidic residues. The segment covering 1082–1095 (KANTQTNEVAQSGS) has biased composition (polar residues). 2 stretches are compositionally biased toward basic and acidic residues: residues 1104 to 1124 (EIKETAKVEKEEKAKVEKDEI) and 1142 to 1154 (APKEVSTDTKVEE). Composition is skewed to polar residues over residues 1155–1178 (TQVQAQPQTQSTTVAAAEATSPNS) and 1199–1210 (VSKNQTENTTDQ). Residues 1211-1226 (PTEREKTAKVETEKTQ) are compositionally biased toward basic and acidic residues. Composition is skewed to polar residues over residues 1227 to 1247 (EPPQVASQASPKQEQSETVQP), 1255 to 1297 (NVPT…TAIT), and 1308 to 1336 (TETAASTEDASQHKANTVADNSVANNSES). The segment covering 1352–1370 (ETSAEETTAASTDETTIAD) has biased composition (low complexity). Positions 1374–1384 (RSKPNRRSRRS) are enriched in basic residues. One can recognise an Autotransporter domain in the interval 1442–1694 (NNEGQYNVWV…TAELKLSFSF (253 aa)).

It localises to the periplasm. The protein resides in the secreted. Its subcellular location is the cell surface. It is found in the cell outer membrane. It catalyses the reaction Cleavage of immunoglobulin A molecules at certain Pro-|-Xaa bonds in the hinge region. No small molecule substrates are known.. In terms of biological role, virulence factor; cleaves host immunoglobulin A producing intact Fc and Fab fragments. The sequence is that of Immunoglobulin A1 protease autotransporter (iga) from Haemophilus influenzae (strain ATCC 51907 / DSM 11121 / KW20 / Rd).